The sequence spans 283 residues: Polyamine aminopropyltransferase (283 aa).

Residues 5–238 (QTWIDEYHKG…GIWSWTFASS (234 aa)) form the PABS domain. An S-methyl-5'-thioadenosine-binding site is contributed by Gln-32. His-63 and Asp-87 together coordinate spermidine. S-methyl-5'-thioadenosine contacts are provided by residues Glu-107 and 139-140 (DG). The active-site Proton acceptor is the Asp-158. 158 to 161 (DCSD) is a spermidine binding site.

This sequence belongs to the spermidine/spermine synthase family. As to quaternary structure, homodimer or homotetramer.

It is found in the cytoplasm. It catalyses the reaction S-adenosyl 3-(methylsulfanyl)propylamine + putrescine = S-methyl-5'-thioadenosine + spermidine + H(+). The protein operates within amine and polyamine biosynthesis; spermidine biosynthesis; spermidine from putrescine: step 1/1. In terms of biological role, catalyzes the irreversible transfer of a propylamine group from the amino donor S-adenosylmethioninamine (decarboxy-AdoMet) to putrescine (1,4-diaminobutane) to yield spermidine. The chain is Polyamine aminopropyltransferase from Prochlorococcus marinus (strain MIT 9301).